The chain runs to 210 residues: Orotate phosphoribosyltransferase (210 aa).

5-phospho-alpha-D-ribose 1-diphosphate contacts are provided by residues Arg-94, Lys-98, His-100, and 120 to 128 (EDLISTGGS). Ser-124 is an orotate binding site.

It belongs to the purine/pyrimidine phosphoribosyltransferase family. PyrE subfamily. As to quaternary structure, homodimer. Mg(2+) is required as a cofactor.

The enzyme catalyses orotidine 5'-phosphate + diphosphate = orotate + 5-phospho-alpha-D-ribose 1-diphosphate. Its pathway is pyrimidine metabolism; UMP biosynthesis via de novo pathway; UMP from orotate: step 1/2. Functionally, catalyzes the transfer of a ribosyl phosphate group from 5-phosphoribose 1-diphosphate to orotate, leading to the formation of orotidine monophosphate (OMP). This is Orotate phosphoribosyltransferase from Bacillus cereus (strain ATCC 14579 / DSM 31 / CCUG 7414 / JCM 2152 / NBRC 15305 / NCIMB 9373 / NCTC 2599 / NRRL B-3711).